A 663-amino-acid chain; its full sequence is Putative glucosamine-6-phosphate deaminase-like protein BT_0258 (663 aa).

Residues M1–L290 are glucosamine-6-phosphate deaminase-like. Residue E184 is part of the active site.

This sequence in the N-terminal section; belongs to the glucosamine/galactosamine-6-phosphate isomerase family. NagB subfamily.

In Bacteroides thetaiotaomicron (strain ATCC 29148 / DSM 2079 / JCM 5827 / CCUG 10774 / NCTC 10582 / VPI-5482 / E50), this protein is Putative glucosamine-6-phosphate deaminase-like protein BT_0258.